The following is a 177-amino-acid chain: Interleukin-1 receptor antagonist protein (177 aa).

An N-terminal signal peptide occupies residues 1 to 25 (MEICRGLRSHLITLLLFLFHSETIC). Cys91 and Cys141 are disulfide-bonded. The N-linked (GlcNAc...) asparagine glycan is linked to Asn109.

This sequence belongs to the IL-1 family. The intracellular form of IL1RN is predominantly expressed in epithelial cells.

The protein localises to the secreted. It is found in the cytoplasm. Anti-inflammatory antagonist of interleukin-1 family of proinflammatory cytokines such as interleukin-1beta/IL1B and interleukin-1alpha/IL1A. Protects from immune dysregulation and uncontrolled systemic inflammation triggered by IL1 for a range of innate stimulatory agents such as pathogens. The polypeptide is Interleukin-1 receptor antagonist protein (IL1RN) (Homo sapiens (Human)).